A 151-amino-acid polypeptide reads, in one-letter code: Testis-expressed protein 29 (151 aa).

Residues 1-56 are Extracellular-facing; sequence MEYVLEVKNSPRHLLKQFTVCDVPLYDICDYNVSRDRCQELGCCFYEGVCYKKAVP. A helical transmembrane segment spans residues 57–77; the sequence is IYIHVFSALIVIIAGAFVITI. Over 78 to 151 the chain is Cytoplasmic; sequence IYRVIQESRK…TITEAEETED (74 aa). The interval 100-151 is disordered; sequence KSSEKAELASSSSKLGLKPASPGPPSAGPSMKSDEDKDDVTGTITEAEETED. The segment covering 107-119 has biased composition (low complexity); the sequence is LASSSSKLGLKPA.

Its subcellular location is the membrane. The polypeptide is Testis-expressed protein 29 (TEX29) (Homo sapiens (Human)).